A 391-amino-acid polypeptide reads, in one-letter code: F-box only protein 5 (391 aa).

Residues Ala-198–Tyr-245 enclose the F-box domain. The ZBR-type zinc finger occupies Cys-318–Ser-366. Residues Cys-322, Cys-325, Cys-340, Cys-345, Cys-350, Cys-353, His-358, and Cys-363 each coordinate Zn(2+). Residues Thr-365–Leu-391 form a disordered region. Positions Lys-382 to Leu-391 are enriched in basic residues.

As to quaternary structure, part of a SCF (SKP1-cullin-F-box) protein ligase complex. Interacts with btrc. Interacts with skp1. Interacts with cdc20. Interacts with pin1; stabilizes fbxo5 by preventing its association with btrc in an isomerization-dependent pathway; this interaction is present during G2 phase and prevents fbxo5 degradation. Interacts with plk1. Post-translationally, proteolysed; proteolysis is induced by both cyclin B-cdk1 and cyclin A-cdk1/2 complex through probable phosphorylation. Proteolysis is inhibited by pin1 during G2.

It localises to the nucleus. It is found in the cytoplasm. The protein resides in the cytoskeleton. The protein localises to the spindle. Its subcellular location is the microtubule organizing center. It localises to the centrosome. Its pathway is protein modification; protein ubiquitination. In terms of biological role, regulates progression through early mitosis by inhibiting the anaphase promoting complex/cyclosome (APC). Binds to the APC activators cdc20 to prevent APC activation. Can also bind directly to the APC to inhibit substrate-binding. Required to arrest unfertilized eggs at metaphase of meiosis II, by preventing their release from metaphase of meiosis II, through inhibition of APC-dependent cyclin B destruction leading to stabilization of cyclin B-cdk1 complex activity. The protein is F-box only protein 5 of Xenopus tropicalis (Western clawed frog).